The sequence spans 437 residues: MANVVVIGAQWGDEGKGKITDLLSRSADVVVRYQGGVNAGHTIVVDGQVLKLHLIPSGILYPDTICLIGSGTVVDPRVMLGELDMLIENGIDISGLQLASTAHVTMPYHRLLDQAMERQRGERRIGTTGRGIGPTYADKSQRSGIRVIDLLDEQRLRDRLEGPLQEKNQLLQTIYGMDPLNADEVIAEYLAYGKRLAPHVVDCSRAIHGAARNRKNILFEGAQGTLLDLDHGTYPYVTSSNPVSGGACIGAGVGPTLIDRVIGVAKAYTTRVGEGPFPTELDGSLNDHLCDRGGEFGTTTGRRRRCGWFDGVIGRYAVEVNGLDCLAVTKLDVLDEIDALQVCVAYELDGERIEHFPSCSEAFARCKPIYETLPGWQCSTADCRRLEDLPEKAMAYLRFLADLMEVPIAIVSLGASRDQTIVVEDPIHGPKRALLSA.

Residues 12 to 18 (GDEGKGK) and 40 to 42 (GHT) each bind GTP. The active-site Proton acceptor is Asp-13. Residues Asp-13 and Gly-40 each coordinate Mg(2+). IMP-binding positions include 13–16 (DEGK), 38–41 (NAGH), Thr-128, Arg-142, Gln-223, Thr-238, and Arg-302. His-41 (proton donor) is an active-site residue. The tract at residues 119–138 (QRGERRIGTTGRGIGPTYAD) is disordered. 298–304 (TTTGRRR) is a substrate binding site. Residues Arg-304, 330 to 332 (KLD), and 412 to 414 (SLG) contribute to the GTP site.

It belongs to the adenylosuccinate synthetase family. In terms of assembly, homodimer. It depends on Mg(2+) as a cofactor.

The protein resides in the cytoplasm. The enzyme catalyses IMP + L-aspartate + GTP = N(6)-(1,2-dicarboxyethyl)-AMP + GDP + phosphate + 2 H(+). It participates in purine metabolism; AMP biosynthesis via de novo pathway; AMP from IMP: step 1/2. Plays an important role in the de novo pathway of purine nucleotide biosynthesis. Catalyzes the first committed step in the biosynthesis of AMP from IMP. The polypeptide is Adenylosuccinate synthetase (Synechococcus sp. (strain WH7803)).